The following is a 181-amino-acid chain: Oligoribonuclease (181 aa).

Residues 8 to 171 (LIWIDLEMTG…LDIQESIAEL (164 aa)) form the Exonuclease domain. The active site involves Tyr129.

This sequence belongs to the oligoribonuclease family.

The protein resides in the cytoplasm. 3'-to-5' exoribonuclease specific for small oligoribonucleotides. This chain is Oligoribonuclease, found in Shewanella amazonensis (strain ATCC BAA-1098 / SB2B).